The chain runs to 309 residues: Mitochondrial succinate-fumarate transporter 1 (309 aa).

Solcar repeat units follow at residues 11–96, 108–196, and 208–298; these read IPPY…FQTA, RGRF…FDIL, and LQPW…VTGL. 6 helical membrane passes run 17–37, 65–85, 111–131, 171–191, 214–234, and 273–293; these read AVSG…IDVI, VRAL…KYTL, FLSG…PFEV, GAAP…TAKN, MISG…FDVV, and GLLP…AVAD.

This sequence belongs to the mitochondrial carrier (TC 2.A.29) family. In terms of tissue distribution, expressed in root tips, cotyledons, hypocotyls, leaves, trichomes, stems, flowers, carpels, anthers, pollen and abscission zone of siliques.

It is found in the mitochondrion inner membrane. In terms of biological role, may transport cytoplasmic succinate, derived from fatty acid oxidation, into the mitochondrial matrix in exchange of fumarate during lipid mobilization in seed germination. Conversion of seed-reserved triacylglycerols into sucrose is necessary for growth before the onset of photosynthesis and involves fatty acid beta-oxidation, the glyoxylate cycle and gluconeogenesis. The protein is Mitochondrial succinate-fumarate transporter 1 (SFC1) of Arabidopsis thaliana (Mouse-ear cress).